Here is a 270-residue protein sequence, read N- to C-terminus: Peflin (270 aa).

The segment at 1 to 97 (MSYQYGQGYS…YRQQGSAGNV (97 aa)) is disordered. A run of 5 repeats spans residues 22-30 (PPRAPYAGG), 44-54 (PPGQQYGGGSP), 62-70 (GPRAPYGGG), 72-81 (APGGPYGGYG), and 83-91 (PQGGPYRQQ). The interval 22–91 (PPRAPYAGGP…QPQGGPYRQQ (70 aa)) is 5 X 9 AA approximate tandem repeat of [AP]-P-G-G-P-Y-G-G-P-P. Low complexity-rich tracts occupy residues 26–47 (PYAG…PPGQ) and 55–66 (YGSYGQPGPRAP). The span at 67-84 (YGGGQAPGGPYGGYGQPQ) shows a compositional bias: gly residues. EF-hand domains are found at residues 100–135 (GVNP…FNNS), 141–169 (TCIM…WTFL), 170–202 (QQWR…MGYN), 203–239 (LSPQ…LQSM), and 240–269 (TQAF…ITRL). Residues aspartate 113, aspartate 115, serine 117, tyrosine 119, and glutamate 124 each contribute to the Ca(2+) site. Ca(2+) is bound by residues aspartate 180, aspartate 182, serine 184, serine 186, and glutamate 191.

As to quaternary structure, heterodimer; heterodimerizes (via the EF-hand 5) with pdcd6.

The protein resides in the cytoplasm. It is found in the endoplasmic reticulum. The protein localises to the membrane. Its subcellular location is the cytoplasmic vesicle. It localises to the COPII-coated vesicle membrane. Functionally, calcium-binding protein that acts as an adapter that bridges unrelated proteins or stabilizes weak protein-protein complexes in response to calcium. Acts as a negative regulator of ER-Golgi transport. The sequence is that of Peflin from Danio rerio (Zebrafish).